We begin with the raw amino-acid sequence, 266 residues long: Indole-3-glycerol phosphate synthase (266 aa).

It belongs to the TrpC family.

It carries out the reaction 1-(2-carboxyphenylamino)-1-deoxy-D-ribulose 5-phosphate + H(+) = (1S,2R)-1-C-(indol-3-yl)glycerol 3-phosphate + CO2 + H2O. It functions in the pathway amino-acid biosynthesis; L-tryptophan biosynthesis; L-tryptophan from chorismate: step 4/5. The chain is Indole-3-glycerol phosphate synthase from Paracidovorax citrulli (strain AAC00-1) (Acidovorax citrulli).